We begin with the raw amino-acid sequence, 399 residues long: Guanine nucleotide-binding protein G(f) subunit alpha (399 aa).

In terms of domain architecture, G-alpha spans 46–399 (TTVKILLLGT…SENVSSMGLF (354 aa)). Positions 49 to 62 (KILLLGTAESGKTT) are G1 motif. GTP is bound by residues 54–61 (GTAESGKT), 188–194 (LHSRKIT), 221–225 (DVGGQ), 290–293 (NKYD), and A371. Positions 186-194 (DILHSRKIT) are G2 motif. Position 194 (T194) interacts with Mg(2+). The interval 217 to 226 (FQMYDVGGQR) is G3 motif. The segment at 286–293 (IVFLNKYD) is G4 motif. Positions 369–374 (TVATDT) are G5 motif.

The protein belongs to the G-alpha family. In terms of assembly, g proteins are composed of 3 units; alpha, beta and gamma. The alpha chain contains the guanine nucleotide binding site. As to expression, during embryogenesis, expressed primarily in the developing gut and transiently in the amnioserosa.

Guanine nucleotide-binding proteins (G proteins) are involved as modulators or transducers in various transmembrane signaling systems. The polypeptide is Guanine nucleotide-binding protein G(f) subunit alpha (Galphaf) (Drosophila melanogaster (Fruit fly)).